A 402-amino-acid polypeptide reads, in one-letter code: Flavohemoprotein (402 aa).

A Globin domain is found at 1-136 (MLSAKTIEIV…IADAFISIEA (136 aa)). H85 is a binding site for heme b. Catalysis depends on charge relay system residues Y95 and E135. Positions 147-402 (GGWKDFRNFV…EFFGPATSLQ (256 aa)) are reductase. The FAD-binding FR-type domain maps to 150 to 260 (KDFRNFVIVK…SAPAGDFVLN (111 aa)). FAD-binding positions include Y188 and 204-207 (RQYS). NADP(+) is bound at residue 273 to 278 (GVGITP). 394–397 (FFGP) contacts FAD.

The protein belongs to the globin family. Two-domain flavohemoproteins subfamily. In the C-terminal section; belongs to the flavoprotein pyridine nucleotide cytochrome reductase family. It depends on heme b as a cofactor. FAD is required as a cofactor.

It catalyses the reaction 2 nitric oxide + NADPH + 2 O2 = 2 nitrate + NADP(+) + H(+). It carries out the reaction 2 nitric oxide + NADH + 2 O2 = 2 nitrate + NAD(+) + H(+). Its function is as follows. Is involved in NO detoxification in an aerobic process, termed nitric oxide dioxygenase (NOD) reaction that utilizes O(2) and NAD(P)H to convert NO to nitrate, which protects the bacterium from various noxious nitrogen compounds. Therefore, plays a central role in the inducible response to nitrosative stress. The protein is Flavohemoprotein of Bacillus cereus (strain ATCC 14579 / DSM 31 / CCUG 7414 / JCM 2152 / NBRC 15305 / NCIMB 9373 / NCTC 2599 / NRRL B-3711).